Reading from the N-terminus, the 158-residue chain is Succinate dehydrogenase [ubiquinone] cytochrome b small subunit B, mitochondrial (158 aa).

The N-terminal 29 residues, 1-29 (MAALVRISSLCHRGVSPLLFRPSSLIRPL), are a transit peptide targeting the mitochondrion. Over 30–62 (AVQQKDHDCSYLISARIHATPSNYAGSGSKAAT) the chain is Mitochondrial matrix. A helical transmembrane segment spans residues 63 to 84 (MHWTGERILSIALLSLAPVAYF). The Mitochondrial intermembrane segment spans residues 85–89 (CPSPA). Residues 90–110 (VDYSLAAALTLHGHWGLGQVV) form a helical membrane-spanning segment. A heme b-binding site is contributed by His-101. Topologically, residues 111–119 (TDYVHGDAK) are mitochondrial matrix. Residue Tyr-113 coordinates a ubiquinone. The helical transmembrane segment at 120-141 (IKMANAGLFVLSTVTFAGLCYF) threads the bilayer. Over 142-158 (NYHDVGICKAVALLWSK) the chain is Mitochondrial intermembrane.

The protein belongs to the CybS family. In terms of assembly, component of complex II composed of four subunits: the flavoprotein (FP) SDHA, iron-sulfur protein (IP) SDHB, and a cytochrome b560 composed of SDHC and SDHD.

The protein resides in the mitochondrion inner membrane. Its pathway is carbohydrate metabolism; tricarboxylic acid cycle. Functionally, membrane-anchoring subunit of succinate dehydrogenase (SDH) that is involved in complex II of the mitochondrial electron transport chain and is responsible for transferring electrons from succinate to ubiquinone (coenzyme Q). SDH also oxidizes malate to the non-canonical enol form of oxaloacetate, enol-oxaloacetate. Enol-oxaloacetate, which is a potent inhibitor of the succinate dehydrogenase activity, is further isomerized into keto-oxaloacetate. The sequence is that of Succinate dehydrogenase [ubiquinone] cytochrome b small subunit B, mitochondrial (sdhdb) from Danio rerio (Zebrafish).